We begin with the raw amino-acid sequence, 243 residues long: MFSSTYLLAIIALAVSSVFAAGPTAVPLGTAGNYAILASAGVSTVPQSVITGAVGLSPAAATFLTGFSLTMSSTGTFSTSTQVTGQLTAADYGTPTPSILTTAIGDMGTAYVNAATRSGPNFLEIYTGALGGKILPPGLYKWTSPVGASADFTIIGTSTDTWIFQIAGTLGLAAGKKIILAGGAQAKNIVWVVAGAVSIEAGAKFEGVILAKTAVTLKTGSSLNGRILSQTAVALQKATVVQK.

A signal peptide spans 1 to 20 (MFSSTYLLAIIALAVSSVFA).

It belongs to the ice-binding protein family.

It is found in the secreted. In terms of biological role, binds to the surface of ice crystals. Inhibits growth of the ice crystals. Has antifreeze activity for survival under snow cover. Has high thermal hysteresis (TH) activity, which is the ability to lower the freezing point of an aqueous solution below its melting point, and thus the freezing of the cell fluid can be prevented protecting the organism from ice damage. The TH activity of this protein is 2.0 degrees Celsius at 0.11 mM. The chain is Ice-binding protein K1-A from Typhula ishikariensis (Gray snow mold fungus).